We begin with the raw amino-acid sequence, 377 residues long: MATSQVLHILPKPSYEHAFNSQRTEFVTTTATNQVELYEQDGNGWKHARTFSDHDKIVTCVDWAPKSNRIVTCSQDRNAYVYEKRPDGTWKQTLVLLRLNRAATFVRWSPNEDKFAVGSGARVISVCYFEQENDWWVSKHLKRPLRSTILSLDWHPNNVLLAAGCADRKAYVLSAYVRDVDAKPEASVWGSRLPFNTVCAEYPSGGWVHAVGFSPSGNALAYAGHDSSVTIAYPSAPEQPPRALITVKLSQLPLRSLLWANESAIVAAGYNYSPILLQGNESGWAHTRDLDAGTSKTSFTHTGNTGEGREEEGPVSFTALRSTFRNMDLKGSSQSISSLPTVHQNMIATLRPYAGTPGNITAFTSSGTDGRVVLWTL.

WD repeat units lie at residues 9 to 48 (ILPK…WKHA), 53 to 92 (DHDK…TWKQ), 98 to 139 (RLNR…WVSK), 144 to 183 (PLRS…VDAK), and 203 to 242 (PSGG…QPPR). The interval 293 to 313 (GTSKTSFTHTGNTGEGREEEG) is disordered. One copy of the WD 6 repeat lies at 342 to 376 (VHQNMIATLRPYAGTPGNITAFTSSGTDGRVVLWT).

It belongs to the WD repeat ARPC1 family. In terms of assembly, component of the Arp2/3 complex composed of arp2, act2, arc1/p41-ARC, arc2/p34-ARC, arc3/p21-ARC, arc4/p20-ARC and arc5/p16-ARC.

The protein localises to the cytoplasm. Its subcellular location is the cytoskeleton. It is found in the actin patch. Functions as a component of the Arp2/3 complex which is involved in regulation of actin polymerization and together with an activating nucleation-promoting factor (NPF) mediates the formation of branched actin networks. The polypeptide is Actin-related protein 2/3 complex subunit 1 (arc1) (Schizosaccharomyces pombe (strain 972 / ATCC 24843) (Fission yeast)).